A 239-amino-acid chain; its full sequence is Ribose-5-phosphate isomerase A (239 aa).

Substrate-binding positions include 34–37 (TGST), 94–97 (DGAD), and 107–110 (KGGG). Residue E116 is the Proton acceptor of the active site. Residue K134 coordinates substrate.

The protein belongs to the ribose 5-phosphate isomerase family. In terms of assembly, homodimer.

The catalysed reaction is aldehydo-D-ribose 5-phosphate = D-ribulose 5-phosphate. It functions in the pathway carbohydrate degradation; pentose phosphate pathway; D-ribose 5-phosphate from D-ribulose 5-phosphate (non-oxidative stage): step 1/1. Its function is as follows. Catalyzes the reversible conversion of ribose-5-phosphate to ribulose 5-phosphate. The polypeptide is Ribose-5-phosphate isomerase A (Treponema denticola (strain ATCC 35405 / DSM 14222 / CIP 103919 / JCM 8153 / KCTC 15104)).